The primary structure comprises 361 residues: G-protein coupled receptor 68 (361 aa).

Over M1–N12 the chain is Extracellular. N3 and N8 each carry an N-linked (GlcNAc...) asparagine glycan. A helical transmembrane segment spans residues C13 to Q49. 2 disulfides stabilise this stretch: C13/C258 and C94/C172. At I50 to R53 the chain is on the cytoplasmic side. A helical membrane pass occupies residues N54–H84. At D85–H89 the chain is on the extracellular side. The helical transmembrane segment at D90–H125 threads the bilayer. Residues P126–R133 lie on the Cytoplasmic side of the membrane. Residues T134–E160 form a helical membrane-spanning segment. Topologically, residues E161–Y176 are extracellular. The tract at residues E161–Y176 is extracellular loop 2 (ECL2). A helical transmembrane segment spans residues P177 to R214. The Cytoplasmic segment spans residues S215–T218. Residues Q219 to W254 form a helical membrane-spanning segment. Over E255–F260 the chain is Extracellular. The chain crosses the membrane as a helical span at residues A261–V289. Over S290–S361 the chain is Cytoplasmic. The interval L340–S361 is disordered. The segment covering G351–S361 has biased composition (gly residues).

It belongs to the G-protein coupled receptor 1 family.

Its subcellular location is the cell membrane. Activated by a network of residues that connects an extracellular-facing cavity to Glu-149, a conserved charged residue buried in the transmembrane core of the receptor. Protonation likely drives conformational changes in extracellular loop 2 (ECL2), which stabilizes movement of transmembrane 3 (TM3) and a series of rearrangements that connect the extracellular-facing cavity to Glu-149, a residue only conserved in proton-sensing G-protein coupled receptors. Activated in an allosteric manner by divalent metal ions at the extracellular surface following the order: Cd(2+) &gt; Co(2+) &gt; Ni(2+) &gt; Zn(2+) &gt; Fe(2+) &gt; Ca(2+) &gt; Mg(2+). In terms of biological role, proton-sensing G-protein coupled receptor activated by extracellular pH, which is required to monitor pH changes and generate adaptive reactions. The receptor is almost silent at pH 7.8 but fully activated at pH 6.8. Ligand binding causes a conformation change that triggers signaling via guanine nucleotide-binding proteins (G proteins) and modulates the activity of downstream effectors, such as phospholipase C. GPR68 is mainly coupled to G(q) G proteins and mediates production of diacylglycerol (DAG) and inositol 1,4,5-trisphosphate (IP3). Acts as a key mechanosensor of fluid shear stress and membrane stretch. Expressed in endothelial cells of small-diameter resistance arteries, where it mediates flow-induced dilation in response to shear stress. May represents an osteoblastic pH sensor regulating cell-mediated responses to acidosis in bone. Acts as a regulator of calcium-sensing receptor CASR in a seesaw manner: GPR68-mediated signaling inhibits CASR signaling in response to protons, while CASR inhibits GPR68 in presence of extracellular calcium. This chain is G-protein coupled receptor 68 (GPR68), found in Bos taurus (Bovine).